Reading from the N-terminus, the 191-residue chain is GTP-binding protein CIN4 (191 aa).

GTP-binding positions include 23–30 (GLDNSGKS), 69–73 (DIGGQ), and 131–134 (NKID).

Functionally, implicated in yeast microtubule function. The protein is GTP-binding protein CIN4 (CIN4) of Saccharomyces cerevisiae (strain ATCC 204508 / S288c) (Baker's yeast).